A 294-amino-acid chain; its full sequence is MEIIEGKMPFMGYETYYRIVGERSEKPPLVLLHGGPGSSHNYFEVLDELAQKDGRRIIMYDQLGCGESSIPDDHPELYTKETWVKELEALREHLALRKMHLLGQSWGGMLAIIYMCDYHPEGIQSLILSSTLSSASLWSKELHRMIKYLPIEEQAAIHRAELTGNFNDPDYLKANEHFMNQHAIDMTKTWPECVMRKKRGGTVAYETAWGPNEYTPEGNLHDYEYTDKLSKIKVPTLITSGTDDLCTPYVAKTMQDQIASSKWRLFEGCGHMSFVEKTDEYVALLQEWLDQHDE.

The AB hydrolase-1 domain maps to 27 to 277 (PPLVLLHGGP…GCGHMSFVEK (251 aa)). The Nucleophile role is filled by S105. The active site involves D244. H271 (proton donor) is an active-site residue.

This sequence belongs to the peptidase S33 family.

It is found in the cell envelope. It catalyses the reaction Release of N-terminal proline from a peptide.. Functionally, releases the N-terminal proline from various substrates. The sequence is that of Proline iminopeptidase from Lactobacillus helveticus (strain DPC 4571).